The chain runs to 217 residues: Ependymin (217 aa).

The first 20 residues, 1–20 (MHTVKLLCVVFSCLCAIGWA), serve as a signal peptide directing secretion. N-linked (GlcNAc...) asparagine glycans are attached at residues Asn-73 and Asn-96.

Belongs to the ependymin family. In terms of assembly, forms disulfide-linked dimers. Post-translationally, binds calcium through the terminal sialic acids. As to expression, EPDs are synthesized in the meninx and secreted in the cerebrospinal fluid.

Its subcellular location is the secreted. May play a role in neural plasticity. May be involved during axon regeneration. The protein is Ependymin (epd) of Danio rerio (Zebrafish).